Here is a 113-residue protein sequence, read N- to C-terminus: Hydrogenase maturation factor HypA (113 aa).

H2 contacts Ni(2+). Zn(2+) is bound by residues C73, C76, C89, and C92.

Belongs to the HypA/HybF family.

Involved in the maturation of [NiFe] hydrogenases. Required for nickel insertion into the metal center of the hydrogenase. The sequence is that of Hydrogenase maturation factor HypA from Xanthobacter autotrophicus (strain ATCC BAA-1158 / Py2).